The chain runs to 325 residues: Probable flavonol synthase 5 (325 aa).

A disordered region spans residues 1-21; the sequence is MEEERDHNASESSLPSLSKQL. Residues 10–21 show a composition bias toward polar residues; that stretch reads SESSLPSLSKQL. The Fe2OG dioxygenase domain maps to 180–280; sequence TAEYVLRVNF…RISWPVFVAP (101 aa). 188 to 190 contributes to the 2-oxoglutarate binding site; that stretch reads NFY. Fe cation-binding residues include His-205, Asp-207, and His-261. 271-273 serves as a coordination point for 2-oxoglutarate; sequence RIS.

This sequence belongs to the iron/ascorbate-dependent oxidoreductase family. Fe(2+) is required as a cofactor. As to expression, expressed in young seedlings.

It carries out the reaction a (2R,3R)-dihydroflavonol + 2-oxoglutarate + O2 = a flavonol + succinate + CO2 + H2O. It participates in secondary metabolite biosynthesis; flavonoid biosynthesis. The protein is Probable flavonol synthase 5 (FLS5) of Arabidopsis thaliana (Mouse-ear cress).